A 557-amino-acid chain; its full sequence is Suprabasin (557 aa).

The N-terminal stretch at 1–23 is a signal peptide; the sequence is MHLASLLSSCSLLLLLGALPGWA. Disordered stretches follow at residues 150 to 175, 422 to 441, 464 to 490, and 509 to 533; these read RFGQGAHHATGQAGKEAEKFGQGAHH, GQGAHHAAEQAGKQAGKVAQ, AAGQAGKEAEKLGQGVHHAAGQAGKQE, and NQLLNDGHPGGSTTQHGGAATTTLT. Residues 153–175 are compositionally biased toward low complexity; sequence QGAHHATGQAGKEAEKFGQGAHH. The segment covering 476-487 has biased composition (low complexity); the sequence is GQGVHHAAGQAG.

The protein localises to the secreted. This chain is Suprabasin (SBSN), found in Bos taurus (Bovine).